A 119-amino-acid polypeptide reads, in one-letter code: Large ribosomal subunit protein bL20 (119 aa).

Belongs to the bacterial ribosomal protein bL20 family.

Binds directly to 23S ribosomal RNA and is necessary for the in vitro assembly process of the 50S ribosomal subunit. It is not involved in the protein synthesizing functions of that subunit. The protein is Large ribosomal subunit protein bL20 of Legionella pneumophila (strain Paris).